Here is a 202-residue protein sequence, read N- to C-terminus: Probable WRKY transcription factor 59 (202 aa).

Positions 103–168 (DEKVALDDGY…YEGRHNHPSP (66 aa)) form a DNA-binding region, WRKY.

Belongs to the WRKY group II-c family.

Its subcellular location is the nucleus. In terms of biological role, transcription factor. Interacts specifically with the W box (5'-(T)TGAC[CT]-3'), a frequently occurring elicitor-responsive cis-acting element. The protein is Probable WRKY transcription factor 59 (WRKY59) of Arabidopsis thaliana (Mouse-ear cress).